The sequence spans 178 residues: MTQMTTADVPSMGRRQFMNLLTFGTVTGVALGALYPVAQYFTPYRAGGGGGGTNAKDELGNNVSASGWLSTHPVGDRSLVQGLKGDPTYLIVEGEDAITSYGINAICTHLGCVVPWNSGANKYMCPCHGSQYDSTGKVVRGPAPLSLAIAHVSIEDDQVLVSQWTETDFRTGTDPWWG.

The helical transmembrane segment at 20–42 (LLTFGTVTGVALGALYPVAQYFT) threads the bilayer. The 91-residue stretch at 71-161 (THPVGDRSLV…VSIEDDQVLV (91 aa)) folds into the Rieske domain. 4 residues coordinate [2Fe-2S] cluster: C107, H109, C125, and H128. An intrachain disulfide couples C112 to C127.

Belongs to the Rieske iron-sulfur protein family. The 4 large subunits of the cytochrome b6-f complex are cytochrome b6, subunit IV (17 kDa polypeptide, PetD), cytochrome f and the Rieske protein, while the 4 small subunits are PetG, PetL, PetM and PetN. The complex functions as a dimer. Requires [2Fe-2S] cluster as cofactor.

It is found in the cellular thylakoid membrane. It carries out the reaction 2 oxidized [plastocyanin] + a plastoquinol + 2 H(+)(in) = 2 reduced [plastocyanin] + a plastoquinone + 4 H(+)(out). Its function is as follows. Component of the cytochrome b6-f complex, which mediates electron transfer between photosystem II (PSII) and photosystem I (PSI), cyclic electron flow around PSI, and state transitions. The polypeptide is Cytochrome b6-f complex iron-sulfur subunit (Prochlorococcus marinus (strain NATL1A)).